The sequence spans 438 residues: UDP-N-acetylmuramoylalanine--D-glutamate ligase (438 aa).

Residue 112-118 (GSNGKST) participates in ATP binding.

This sequence belongs to the MurCDEF family.

It is found in the cytoplasm. It carries out the reaction UDP-N-acetyl-alpha-D-muramoyl-L-alanine + D-glutamate + ATP = UDP-N-acetyl-alpha-D-muramoyl-L-alanyl-D-glutamate + ADP + phosphate + H(+). The protein operates within cell wall biogenesis; peptidoglycan biosynthesis. In terms of biological role, cell wall formation. Catalyzes the addition of glutamate to the nucleotide precursor UDP-N-acetylmuramoyl-L-alanine (UMA). This Sodalis glossinidius (strain morsitans) protein is UDP-N-acetylmuramoylalanine--D-glutamate ligase.